The following is a 284-amino-acid chain: HTH-type transcriptional activator RhaR (284 aa).

The region spanning 181–279 (DMLMNALRAS…GVSPSAYRQR (99 aa)) is the HTH araC/xylS-type domain. 2 consecutive DNA-binding regions (H-T-H motif) follow at residues 198–219 (EAFC…KEQT) and 246–269 (IGDV…HQAF).

As to quaternary structure, binds DNA as a dimer.

The protein resides in the cytoplasm. Activates expression of the rhaSR operon in response to L-rhamnose. This Pectobacterium atrosepticum (strain SCRI 1043 / ATCC BAA-672) (Erwinia carotovora subsp. atroseptica) protein is HTH-type transcriptional activator RhaR.